Reading from the N-terminus, the 514-residue chain is Lysine--tRNA ligase (514 aa).

Mg(2+) is bound by residues Glu-424 and Glu-431.

The protein belongs to the class-II aminoacyl-tRNA synthetase family. In terms of assembly, homodimer. Mg(2+) serves as cofactor.

It localises to the cytoplasm. The catalysed reaction is tRNA(Lys) + L-lysine + ATP = L-lysyl-tRNA(Lys) + AMP + diphosphate. This chain is Lysine--tRNA ligase, found in Cupriavidus necator (strain ATCC 17699 / DSM 428 / KCTC 22496 / NCIMB 10442 / H16 / Stanier 337) (Ralstonia eutropha).